Reading from the N-terminus, the 123-residue chain is WAP four-disulfide core domain protein 5 (123 aa).

Positions 1-24 are cleaved as a signal peptide; that stretch reads MRIQSLLLLGALLAVGSQPPAAFG. 2 WAP domains span residues 27-73 and 74-121; these read KGEK…CVPR and VSVK…RDPV. 8 disulfides stabilise this stretch: C34–C62, C41–C66, C49–C61, C55–C70, C81–C109, C88–C113, C96–C108, and C102–C117.

It localises to the secreted. Its function is as follows. Putative acid-stable proteinase inhibitor. In Aotus nancymaae (Ma's night monkey), this protein is WAP four-disulfide core domain protein 5 (WFDC5).